Reading from the N-terminus, the 146-residue chain is Hemoglobin subunit beta (146 aa).

N-acetylvaline is present on V1. Positions 2–146 constitute a Globin domain; the sequence is HLTGEEKSAV…VANALAHKYH (145 aa). The residue at position 12 (T12) is a Phosphothreonine. Phosphoserine is present on S44. An N6-acetyllysine modification is found at K59. Residue H63 participates in heme b binding. At K82 the chain carries N6-acetyllysine. H92 serves as a coordination point for heme b. C93 is modified (S-nitrosocysteine). The residue at position 144 (K144) is an N6-acetyllysine.

This sequence belongs to the globin family. Heterotetramer of two alpha chains and two beta chains. Red blood cells.

In terms of biological role, involved in oxygen transport from the lung to the various peripheral tissues. The chain is Hemoglobin subunit beta (HBB) from Loris tardigradus (Slender loris).